We begin with the raw amino-acid sequence, 251 residues long: Probable transcriptional regulatory protein SYO3AOP1_0685 (251 aa).

Belongs to the TACO1 family.

It is found in the cytoplasm. In Sulfurihydrogenibium sp. (strain YO3AOP1), this protein is Probable transcriptional regulatory protein SYO3AOP1_0685.